We begin with the raw amino-acid sequence, 484 residues long: GRIP domain-containing protein RUD3 (484 aa).

Over residues 1 to 15 the composition is skewed to basic residues; that stretch reads MGKNKKKTGKKAKSH. The disordered stretch occupies residues 1 to 75; sequence MGKNKKKTGK…GVDKQKVNDG (75 aa). Over residues 16–30 the composition is skewed to basic and acidic residues; it reads PHVEDVDETVNKPEE. Ser-55 and Ser-64 each carry phosphoserine. Over residues 61–72 the composition is skewed to basic and acidic residues; sequence KDLSEGVDKQKV. Positions 84–383 form a coiled coil; that stretch reads LEDKKAGDEM…LQIGKLRHEA (300 aa). Residues 401-452 enclose the GRIP domain; sequence SDSESVDKELISNLLISFVSIPRADPRKFEVLELLSNFLNWDEDKKQQAGLI. Residue Ser-468 is modified to Phosphoserine.

The protein resides in the golgi apparatus lumen. Involved in the structural organization of the cis-Golgi and in vesicle targeting/fusion stages of ER to Golgi transport. In Saccharomyces cerevisiae (strain ATCC 204508 / S288c) (Baker's yeast), this protein is GRIP domain-containing protein RUD3 (RUD3).